Reading from the N-terminus, the 92-residue chain is Exodeoxyribonuclease 7 small subunit (92 aa).

Residues 1-22 form a disordered region; sequence MPKKNAISESTNSTPETAPAMT. Positions 7–16 are enriched in polar residues; it reads ISESTNSTPE.

The protein belongs to the XseB family. As to quaternary structure, heterooligomer composed of large and small subunits.

It localises to the cytoplasm. The catalysed reaction is Exonucleolytic cleavage in either 5'- to 3'- or 3'- to 5'-direction to yield nucleoside 5'-phosphates.. Its function is as follows. Bidirectionally degrades single-stranded DNA into large acid-insoluble oligonucleotides, which are then degraded further into small acid-soluble oligonucleotides. The sequence is that of Exodeoxyribonuclease 7 small subunit from Photorhabdus laumondii subsp. laumondii (strain DSM 15139 / CIP 105565 / TT01) (Photorhabdus luminescens subsp. laumondii).